A 444-amino-acid chain; its full sequence is Probable glycine dehydrogenase (decarboxylating) subunit 1 (444 aa).

Belongs to the GcvP family. N-terminal subunit subfamily. As to quaternary structure, the glycine cleavage system is composed of four proteins: P, T, L and H. In this organism, the P 'protein' is a heterodimer of two subunits.

It catalyses the reaction N(6)-[(R)-lipoyl]-L-lysyl-[glycine-cleavage complex H protein] + glycine + H(+) = N(6)-[(R)-S(8)-aminomethyldihydrolipoyl]-L-lysyl-[glycine-cleavage complex H protein] + CO2. Its function is as follows. The glycine cleavage system catalyzes the degradation of glycine. The P protein binds the alpha-amino group of glycine through its pyridoxal phosphate cofactor; CO(2) is released and the remaining methylamine moiety is then transferred to the lipoamide cofactor of the H protein. This chain is Probable glycine dehydrogenase (decarboxylating) subunit 1, found in Chlorobaculum parvum (strain DSM 263 / NCIMB 8327) (Chlorobium vibrioforme subsp. thiosulfatophilum).